We begin with the raw amino-acid sequence, 177 residues long: Large ribosomal subunit protein uL6 (177 aa).

The protein belongs to the universal ribosomal protein uL6 family. Part of the 50S ribosomal subunit.

This protein binds to the 23S rRNA, and is important in its secondary structure. It is located near the subunit interface in the base of the L7/L12 stalk, and near the tRNA binding site of the peptidyltransferase center. The polypeptide is Large ribosomal subunit protein uL6 (Polaromonas naphthalenivorans (strain CJ2)).